Consider the following 142-residue polypeptide: Large ribosomal subunit protein uL11 (142 aa).

Belongs to the universal ribosomal protein uL11 family. Part of the ribosomal stalk of the 50S ribosomal subunit. Interacts with L10 and the large rRNA to form the base of the stalk. L10 forms an elongated spine to which L12 dimers bind in a sequential fashion forming a multimeric L10(L12)X complex. Post-translationally, one or more lysine residues are methylated.

Functionally, forms part of the ribosomal stalk which helps the ribosome interact with GTP-bound translation factors. This chain is Large ribosomal subunit protein uL11, found in Rhodopseudomonas palustris (strain BisB5).